Here is a 235-residue protein sequence, read N- to C-terminus: Transcriptional regulatory protein WalR (235 aa).

The Response regulatory domain maps to 4–117 (KILVVDDEKP…ELLARVKANL (114 aa)). D53 is modified (4-aspartylphosphate). Positions 132–231 (SNEIHIGSLV…RRGVGYYLRN (100 aa)) form a DNA-binding region, ompR/PhoB-type.

As to quaternary structure, homodimer. Phosphorylated by WalK.

It is found in the cytoplasm. Functionally, member of the two-component regulatory system WalK/WalR involved in the regulation of the ftsAZ operon, the yocH, ykvT, cwlO, lytE, ydjM, yjeA, yoeB genes and the tagAB and tagDEF operons. Binds to the ftsAZ P1 promoter sequence in vitro. WalR has been shown to directly bind to the regulatory regions of yocH, ykvT, tagAB/tagDEF. Activates cwlO, lytE and ydjM and represses yoeB and yjeA. The sequence is that of Transcriptional regulatory protein WalR from Bacillus subtilis (strain 168).